The chain runs to 934 residues: Bifunctional uridylyltransferase/uridylyl-removing enzyme (934 aa).

The uridylyltransferase stretch occupies residues 1 to 379 (MSAHDLKLEE…TFSRRKRKLS (379 aa)). The uridylyl-removing stretch occupies residues 380–736 (DDGAFISENH…AKPHAFEAVT (357 aa)). Residues 496 to 613 (VDEHLLRCIA…IDFADTVQTM (118 aa)) enclose the HD domain. 2 ACT domains span residues 737–818 (EITV…DMLA) and 848–931 (VIEV…RSPQ).

Belongs to the GlnD family. Requires Mg(2+) as cofactor.

The enzyme catalyses [protein-PII]-L-tyrosine + UTP = [protein-PII]-uridylyl-L-tyrosine + diphosphate. It carries out the reaction [protein-PII]-uridylyl-L-tyrosine + H2O = [protein-PII]-L-tyrosine + UMP + H(+). Uridylyltransferase (UTase) activity is inhibited by glutamine, while glutamine activates uridylyl-removing (UR) activity. Modifies, by uridylylation and deuridylylation, the PII regulatory proteins (GlnB and homologs), in response to the nitrogen status of the cell that GlnD senses through the glutamine level. Under low glutamine levels, catalyzes the conversion of the PII proteins and UTP to PII-UMP and PPi, while under higher glutamine levels, GlnD hydrolyzes PII-UMP to PII and UMP (deuridylylation). Thus, controls uridylylation state and activity of the PII proteins, and plays an important role in the regulation of nitrogen assimilation and metabolism. The protein is Bifunctional uridylyltransferase/uridylyl-removing enzyme of Brucella ovis (strain ATCC 25840 / 63/290 / NCTC 10512).